A 112-amino-acid polypeptide reads, in one-letter code: Transmembrane protein 14C (112 aa).

Helical transmembrane passes span 7–27 (VVPLHWFGFGYAALVASGGII), 32–52 (AGSVPSLAAGLLFGSLAGLGA), 62–82 (VWVFLATSGTLAGIMGMRFYH), and 88–108 (PAGLIAGASLLMVAKVGVSMF).

This sequence belongs to the TMEM14 family.

Its subcellular location is the mitochondrion membrane. In terms of biological role, required for normal heme biosynthesis. The protein is Transmembrane protein 14C (TMEM14C) of Homo sapiens (Human).